The following is a 623-amino-acid chain: Leucine-rich repeat, immunoglobulin-like domain and transmembrane domain-containing protein 1 (623 aa).

The signal sequence occupies residues 1–21 (MRVALGMLWLLALAWPPQARG). Positions 22 to 59 (FCPSQCSCSLHIMGDGSKARTVVCNDPDMTLPPASIPP) constitute an LRRNT domain. The Lumenal segment spans residues 22–526 (FCPSQCSCSL…EVVDAENTQQ (505 aa)). 5 LRR repeats span residues 60 to 81 (DTSR…AFRP), 84 to 105 (RLEQ…MLRG), 108 to 129 (RLRE…ALRD), 132 to 153 (KLRL…AARF), and 156 to 177 (NLTF…LIVS). Asparagine 156 carries an N-linked (GlcNAc...) asparagine glycan. Residues 201-253 (NPWACDCRLYDLVHLLDGWAPNLAFIETELRCASPRSLAGVAFSQLELRKCQG) form the LRRCT domain. Residues 266-335 (LLGGTALLRC…YICQAKNFLG (70 aa)) form the Ig-like C2-type domain. Cysteine 275 and cysteine 328 are disulfide-bonded. Asparagine 296 and asparagine 455 each carry an N-linked (GlcNAc...) asparagine glycan. Residues 430-518 (MVRSVKVVGD…QCVIFSTNEV (89 aa)) form the Fibronectin type-III domain. The chain crosses the membrane as a helical span at residues 527-547 (LINVVVISVAIVIALPLTLLV). The Cytoplasmic portion of the chain corresponds to 548-623 (CCSALQKRCR…GGRRINEYFC (76 aa)). The stretch at 571 to 594 (YVNLERLGYSEDGLEELSRHSVSE) is one LRR 6 repeat.

In terms of assembly, may form a homodimer. Interacts with LRIT2; may form a heterodimer with LRIT2. Interacts (via its N-terminal extracellular domain) with metabotropic glutamate receptor GRM6. Interacts (via its extreme C-terminus) with the scaffold protein FRMPD2 (via the third PDZ domain); the interaction leads to their colocalization in photoreceptor synapses.

Its subcellular location is the endoplasmic reticulum membrane. The protein resides in the cell projection. It is found in the dendrite. In terms of biological role, photoreceptor synaptic protein essential for normal vision. Involved in synapse formation in cone photoreceptor cells. In Homo sapiens (Human), this protein is Leucine-rich repeat, immunoglobulin-like domain and transmembrane domain-containing protein 1 (LRIT1).